We begin with the raw amino-acid sequence, 370 residues long: MYIQNLELTSYRNYERAELQFENKVNVIIGENAQGKTNLMEAIYVLSMAKSHRTSNDKELIRWDEDYAKIEGRVMKRNGDIPMQLVISKKGKKGKVNHIEQQKLSQYVGALNTIMFAPEDLNLVKGSPQVRRRFLDMEIGQVSAVYLYDLSLYQKILSQRNHFLKQLQSRKQTDRTMLDVLTDQLIEAAAKVVAKRLQFTAQLEKWAQPIHSGISRGLEELTLKYHTALDVSDPKDLSKIGNSYQESFSKLKEKEIERGVTLFGPHRDDVLFYVNGRDVQTYGSQGQQRTTALSLKLAEIDLIHEEIGEYPILLLDDVLSELDDYRQSHLLHTIQGRVQTFVTTTSVDGIDHDTLHQAGMFRVENGTLVK.

30 to 37 (GENAQGKT) serves as a coordination point for ATP.

It belongs to the RecF family.

It localises to the cytoplasm. In terms of biological role, the RecF protein is involved in DNA metabolism; it is required for DNA replication and normal SOS inducibility. RecF binds preferentially to single-stranded, linear DNA. It also seems to bind ATP. This Bacillus velezensis (strain DSM 23117 / BGSC 10A6 / LMG 26770 / FZB42) (Bacillus amyloliquefaciens subsp. plantarum) protein is DNA replication and repair protein RecF.